The following is a 145-amino-acid chain: Large ribosomal subunit protein uL11 (145 aa).

This sequence belongs to the universal ribosomal protein uL11 family. As to quaternary structure, part of the ribosomal stalk of the 50S ribosomal subunit. Interacts with L10 and the large rRNA to form the base of the stalk. L10 forms an elongated spine to which L12 dimers bind in a sequential fashion forming a multimeric L10(L12)X complex. One or more lysine residues are methylated.

Its function is as follows. Forms part of the ribosomal stalk which helps the ribosome interact with GTP-bound translation factors. This is Large ribosomal subunit protein uL11 from Persephonella marina (strain DSM 14350 / EX-H1).